The following is a 3456-amino-acid chain: Genome polyprotein (3456 aa).

Residues 600 to 743 (NVANIPLDDF…ATRLKQIQFY (144 aa)) enclose the Peptidase S30 domain. Catalysis depends on for P1 proteinase activity residues H640, D652, and S689. The Peptidase C6 domain maps to 1075-1196 (VWEFNEGYCY…EGEMLTYKVG (122 aa)). Catalysis depends on C1083, which acts as the For helper component proteinase activity. An HAT 1 repeat occupies 1094–1126 (FINEDEMEFYKNQMNQIVLNLGAWPTFEQYLVE). H1155 acts as the For helper component proteinase activity in catalysis. One can recognise a Helicase ATP-binding domain in the interval 1617–1768 (NIRTSGETDV…TRHKIKVETL (152 aa)). Position 1630-1637 (1630-1637 (SGVGGGKS)) interacts with ATP. The Helicase C-terminal domain maps to 1787–1947 (DATSVGDVIL…GIKPVCDRVD (161 aa)). Residue Y2304 is modified to O-(5'-phospho-RNA)-tyrosine. Positions 2412–2636 (AVDSHVGTPT…VEWSRLLPTT (225 aa)) constitute a Peptidase C4 domain. Active-site for nuclear inclusion protein A activity residues include H2457, D2494, and C2566. The HAT 2 repeat unit spans residues 2597–2629 (HIFEPVNETFIEMLAKMEYAKGFWKFNPELVEW). A RdRp catalytic domain is found at 2891–3011 (WVFIDCDGSR…NCPRSTANAI (121 aa)). Residues 3082–3115 (LNAAYIESFGYEDLMTEIEKFAHFWAKKHGLNDV) form an HAT 3 repeat.

Post-translationally, VPg is uridylylated by the polymerase and is covalently attached to the 5'-end of the genomic RNA. This uridylylated form acts as a nucleotide-peptide primer for the polymerase. In terms of processing, genome polyprotein of potyviruses undergoes post-translational proteolytic processing by the main proteinase NIa-pro resulting in the production of at least ten individual proteins. The P1 proteinase and the HC-pro cleave only their respective C-termini autocatalytically. 6K1 is essential for proper proteolytic separation of P3 from CI.

It localises to the host cytoplasmic vesicle. The protein localises to the virion. It catalyses the reaction RNA(n) + a ribonucleoside 5'-triphosphate = RNA(n+1) + diphosphate. The catalysed reaction is Hydrolyzes glutaminyl bonds, and activity is further restricted by preferences for the amino acids in P6 - P1' that vary with the species of potyvirus, e.g. Glu-Xaa-Xaa-Tyr-Xaa-Gln-|-(Ser or Gly) for the enzyme from tobacco etch virus. The natural substrate is the viral polyprotein, but other proteins and oligopeptides containing the appropriate consensus sequence are also cleaved.. The enzyme catalyses Hydrolyzes a Gly-|-Gly bond at its own C-terminus, commonly in the sequence -Tyr-Xaa-Val-Gly-|-Gly, in the processing of the potyviral polyprotein.. Required for aphid transmission and also has proteolytic activity. Only cleaves a Gly-Gly dipeptide at its own C-terminus. Interacts with virions and aphid stylets. Acts as a suppressor of RNA-mediated gene silencing, also known as post-transcriptional gene silencing (PTGS), a mechanism of plant viral defense that limits the accumulation of viral RNAs. May have RNA-binding activity. In terms of biological role, has helicase activity. It may be involved in replication. Functionally, indispensable for virus replication. Its function is as follows. Mediates the cap-independent, EIF4E-dependent translation of viral genomic RNAs. Binds to the cap-binding site of host EIF4E and thus interferes with the host EIF4E-dependent mRNA export and translation. VPg-RNA directly binds EIF4E and is a template for transcription. Also forms trimeric complexes with EIF4E-EIF4G, which are templates for translation. Has RNA-binding and proteolytic activities. In terms of biological role, an RNA-dependent RNA polymerase that plays an essential role in the virus replication. Functionally, involved in aphid transmission, cell-to-cell and systemis movement, encapsidation of the viral RNA and in the regulation of viral RNA amplification. This Sweet potato mild mottle virus (isolate Salazar) (SPMMV) protein is Genome polyprotein.